Consider the following 288-residue polypeptide: Protoheme IX farnesyltransferase (288 aa).

Helical transmembrane passes span 16 to 36, 37 to 57, 88 to 108, 111 to 131, 138 to 158, 162 to 182, 210 to 230, 236 to 256, and 265 to 285; these read VWSL…PYFN, LHYI…SMGA, INGL…LAAF, LYAA…YSYL, WNII…WYTV, FSIL…IHVW, AICI…PAFF, VYMI…IVFV, and LKLF…VLIF.

Belongs to the UbiA prenyltransferase family. Protoheme IX farnesyltransferase subfamily.

It is found in the cell membrane. It carries out the reaction heme b + (2E,6E)-farnesyl diphosphate + H2O = Fe(II)-heme o + diphosphate. Its pathway is porphyrin-containing compound metabolism; heme O biosynthesis; heme O from protoheme: step 1/1. Converts heme B (protoheme IX) to heme O by substitution of the vinyl group on carbon 2 of heme B porphyrin ring with a hydroxyethyl farnesyl side group. This Thermoplasma acidophilum (strain ATCC 25905 / DSM 1728 / JCM 9062 / NBRC 15155 / AMRC-C165) protein is Protoheme IX farnesyltransferase.